The following is a 489-amino-acid chain: ATP synthase subunit beta 1 (489 aa).

159-166 is a binding site for ATP; that stretch reads GGAGVGKT. Residues 465–477 show a composition bias toward basic and acidic residues; sequence EKSKKAAEDKPKA. Positions 465–489 are disordered; the sequence is EKSKKAAEDKPKAEEDEDATSLHDA.

Belongs to the ATPase alpha/beta chains family. As to quaternary structure, F-type ATPases have 2 components, CF(1) - the catalytic core - and CF(0) - the membrane proton channel. CF(1) has five subunits: alpha(3), beta(3), gamma(1), delta(1), epsilon(1). CF(0) has three main subunits: a(1), b(2) and c(9-12). The alpha and beta chains form an alternating ring which encloses part of the gamma chain. CF(1) is attached to CF(0) by a central stalk formed by the gamma and epsilon chains, while a peripheral stalk is formed by the delta and b chains.

The protein localises to the cell inner membrane. It catalyses the reaction ATP + H2O + 4 H(+)(in) = ADP + phosphate + 5 H(+)(out). In terms of biological role, produces ATP from ADP in the presence of a proton gradient across the membrane. The catalytic sites are hosted primarily by the beta subunits. In Marinomonas sp. (strain MWYL1), this protein is ATP synthase subunit beta 1.